The chain runs to 440 residues: Chromosome partition protein MukF (440 aa).

Positions 208–236 (LSETSGTLRELQDTLEAAGDKLQANLLRI) are leucine-zipper.

It belongs to the MukF family. In terms of assembly, interacts, and probably forms a ternary complex, with MukE and MukB via its C-terminal region. The complex formation is stimulated by calcium or magnesium. It is required for an interaction between MukE and MukB.

The protein resides in the cytoplasm. It is found in the nucleoid. Involved in chromosome condensation, segregation and cell cycle progression. May participate in facilitating chromosome segregation by condensation DNA from both sides of a centrally located replisome during cell division. Not required for mini-F plasmid partitioning. Probably acts via its interaction with MukB and MukE. Overexpression results in anucleate cells. It has a calcium binding activity. This is Chromosome partition protein MukF from Escherichia coli O17:K52:H18 (strain UMN026 / ExPEC).